A 225-amino-acid chain; its full sequence is Enolase-phosphatase E1 (225 aa).

The protein belongs to the HAD-like hydrolase superfamily. MasA/MtnC family. As to quaternary structure, monomer. Mg(2+) is required as a cofactor.

The enzyme catalyses 5-methylsulfanyl-2,3-dioxopentyl phosphate + H2O = 1,2-dihydroxy-5-(methylsulfanyl)pent-1-en-3-one + phosphate. The protein operates within amino-acid biosynthesis; L-methionine biosynthesis via salvage pathway; L-methionine from S-methyl-5-thio-alpha-D-ribose 1-phosphate: step 3/6. It participates in amino-acid biosynthesis; L-methionine biosynthesis via salvage pathway; L-methionine from S-methyl-5-thio-alpha-D-ribose 1-phosphate: step 4/6. Functionally, bifunctional enzyme that catalyzes the enolization of 2,3-diketo-5-methylthiopentyl-1-phosphate (DK-MTP-1-P) into the intermediate 2-hydroxy-3-keto-5-methylthiopentenyl-1-phosphate (HK-MTPenyl-1-P), which is then dephosphorylated to form the acireductone 1,2-dihydroxy-3-keto-5-methylthiopentene (DHK-MTPene). This Pseudomonas aeruginosa (strain UCBPP-PA14) protein is Enolase-phosphatase E1.